A 359-amino-acid polypeptide reads, in one-letter code: Bergaptol O-methyltransferase (359 aa).

His-126 is a binding site for bergaptol. Residues Ser-179, Gly-203, Asp-226, Asp-246, and Lys-260 each contribute to the S-adenosyl-L-homocysteine site. His-264 serves as a coordination point for bergaptol. His-264 functions as the Proton acceptor in the catalytic mechanism.

Belongs to the class I-like SAM-binding methyltransferase superfamily. Cation-independent O-methyltransferase family. COMT subfamily. Homodimer. Mostly expressed in roots and, to a lower extent, in stems and leaves.

The protein resides in the cytoplasm. The enzyme catalyses bergaptol + S-adenosyl-L-methionine = bergapten + S-adenosyl-L-homocysteine. The protein operates within aromatic compound metabolism. It participates in secondary metabolite biosynthesis. In terms of biological role, O-methyltransferase involved in the biosynthesis of furocoumarins natural products such as bergapten, a photosensitizer used for medical purpose such as treating psoriasis and vitiligo or facilitating resistance to microbial infection and other stresses. Catalyzes specifically the methylation of bergaptol. Not active on xanthotol, isoscopoletin, scopoletin and esculetin. The polypeptide is Bergaptol O-methyltransferase (Kitagawia praeruptora (Peucedanum praeruptorum)).